A 238-amino-acid polypeptide reads, in one-letter code: ATP-dependent Clp protease proteolytic subunit 4 (238 aa).

Ser-113 serves as the catalytic Nucleophile. The active site involves His-138.

This sequence belongs to the peptidase S14 family. As to quaternary structure, fourteen ClpP subunits assemble into 2 heptameric rings which stack back to back to give a disk-like structure with a central cavity, resembling the structure of eukaryotic proteasomes.

Its subcellular location is the cytoplasm. It carries out the reaction Hydrolysis of proteins to small peptides in the presence of ATP and magnesium. alpha-casein is the usual test substrate. In the absence of ATP, only oligopeptides shorter than five residues are hydrolyzed (such as succinyl-Leu-Tyr-|-NHMec, and Leu-Tyr-Leu-|-Tyr-Trp, in which cleavage of the -Tyr-|-Leu- and -Tyr-|-Trp bonds also occurs).. Its function is as follows. Cleaves peptides in various proteins in a process that requires ATP hydrolysis. Has a chymotrypsin-like activity. Plays a major role in the degradation of misfolded proteins. This is ATP-dependent Clp protease proteolytic subunit 4 from Frankia casuarinae (strain DSM 45818 / CECT 9043 / HFP020203 / CcI3).